The following is a 1906-amino-acid chain: Myosin light chain kinase, smooth muscle (1906 aa).

Ig-like C2-type domains follow at residues 28–117 (PAFT…VELT) and 156–244 (PKFA…AELT). 2 disordered regions span residues 127 to 157 (SLPS…SPPK) and 309 to 453 (ETFY…SKVS). The segment covering 309–321 (ETFYTSREAKDGK) has biased composition (basic and acidic residues). Polar residues-rich tracts occupy residues 345–354 (LQKTSSTITL) and 384–402 (PLMT…QVSP). The segment covering 403 to 424 (RSRETENRAGVRKSVKEEKREP) has biased composition (basic and acidic residues). Ig-like C2-type domains lie at 429 to 517 (PQFE…WLLT), 521 to 613 (PKVE…AQVT), 637 to 725 (PIFL…ATLT), and 735 to 830 (PWFI…SSAS). An IIA-1 repeat occupies 660–676 (VSANPCPEIIWLHNGKE). Residues 660-1833 (VSANPCPEII…EVMWYKDDQP (1174 aa)) are 4 X repeats, motif IIA. Residues 693–708 (SLYIQEVFPEDTGKYT) form an IIB-1 repeat. Residues 693 to 1866 (SLYIQEVFPE…VCGDDDAKYT (1174 aa)) form a 5 X repeats, motif IIB region. The stretch at 758–774 (IAGDPFPTVHWFKDGQE) is one IIA-2 repeat. The stretch at 791 to 807 (TLILRNVQSRHAGQYEI) is one IIB-2 repeat. Disordered regions lie at residues 831-881 (RAEM…QEDV) and 947-1086 (PKTL…APSF). Composition is skewed to basic and acidic residues over residues 833-850 (EMLR…RRDG) and 867-881 (SSSE…QEDV). The III-1 repeat unit spans residues 970-987 (AKKGTPKTPLPEKVPPPK). The segment at 970–1226 (AKKGTPKTPL…TPPKAATPPQ (257 aa)) is 4 X repeats, motif III. Pro residues predominate over residues 977–988 (TPLPEKVPPPKP). The stretch at 999–1016 (AKKKPPAENGSASTPAPN) is one III-2 repeat. The span at 1039–1051 (VKKEEKNDRKCEH) shows a compositional bias: basic and acidic residues. An III-3 repeat occupies 1061–1078 (IGKKAENKPAASKPTPPP). Ig-like C2-type domains are found at residues 1084–1172 (PSFT…CKVL) and 1225–1313 (PQIT…VNLT). The stretch at 1107–1123 (ISSDPPASVSWTLDSKA) is one IIA-3 repeat. The IIB-3 repeat unit spans residues 1140–1156 (SLTIEKVMPEDGGEYKC). Positions 1180-1227 (KAAKPAEKKTKKPKTTLPPVLSTESSEATVKKKPAPKTPPKAATPPQI) are disordered. The stretch at 1209–1226 (VKKKPAPKTPPKAATPPQ) is one III-4 repeat. The stretch at 1281–1297 (KLTISSTKQEHCGCYTL) is one IIB-4 repeat. A motif IA region spans residues 1317–1364 (KPDPPAGTPCASDIRSSSLTLSWYGSSYDGGSAVQSYTVEIWNSVDNK). The Fibronectin type-III domain occupies 1321 to 1414 (PAGTPCASDI…ESEVVKVGEK (94 aa)). The interval 1385 to 1402 (REYKFRVRAANVYGISEP) is motif IB. Residues 1414-1433 (KQEEELKEEEAELSDDEGKE) form a disordered region. Residues 1415-1432 (QEEELKEEEAELSDDEGK) are compositionally biased toward acidic residues. The Protein kinase domain occupies 1453–1708 (YNIEERLGSG…CTQCLQHPWL (256 aa)). Residues 1459-1467 (LGSGKFGQV) and K1482 contribute to the ATP site. The Proton acceptor role is filled by D1574. A calmodulin-binding region spans residues 1700 to 1763 (TQCLQHPWLQ…SGMSGRKASG (64 aa)). The calmodulin autoinhibition (AM13) region stretch occupies residues 1716-1728 (EAKKLSKDRMKKY). The tract at residues 1730 to 1749 (ARRKWQKTGHAVRAIGRLSS) is calmodulin recognition (RS20) region. Position 1762 is a phosphoserine; by PKG (S1762). Residue S1768 is modified to Phosphoserine; by MAPK. Residues 1794–1885 (PYFTKTILDM…ATCTAELLVE (92 aa)) enclose the Ig-like C2-type 9 domain. An IIA-4 repeat occupies 1817-1833 (IEGYPDPEVMWYKDDQP). An IIB-5 repeat occupies 1851-1866 (SLTISEVCGDDDAKYT). Positions 1885-1906 (ETMGKEGEGEGEGEEDEEEEEE) are disordered. Residues 1893–1906 (GEGEGEEDEEEEEE) are compositionally biased toward acidic residues.

This sequence belongs to the protein kinase superfamily. CAMK Ser/Thr protein kinase family. All isoforms including Telokin bind calmodulin. Requires Mg(2+) as cofactor. It depends on Ca(2+) as a cofactor. The C-terminus is deglutamylated, leading to the formation of Myosin light chain kinase, smooth muscle, deglutamylated form. The C-terminus is variable, with one to five C-terminal glutamyl residues being removed producing five forms differring in their number of C-terminal glutamyl residues. In terms of processing, acetylated. Post-translationally, phosphorylation of telokin by PKG has no significant effect on its myosin binding activity, but promotes translocation to the membrane. Isoform telokin is expressed in gizzard, heart, lung, intestine, and skeletal muscle although the levels of the expression in the latter were much less than that in the gizzard.

The protein resides in the cytoplasm. It is found in the cytosol. The protein localises to the membrane. It carries out the reaction L-seryl-[myosin light chain] + ATP = O-phospho-L-seryl-[myosin light chain] + ADP + H(+). It catalyses the reaction L-threonyl-[myosin light chain] + ATP = O-phospho-L-threonyl-[myosin light chain] + ADP + H(+). With respect to regulation, activated by phosphorylation on Tyr-478. Isoforms which lack this tyrosine residue are not regulated in this way. All catalytically active isoforms require binding to calcium and calmodulin for activation. In terms of biological role, phosphorylates a specific serine in the N-terminus of a myosin light chain, which leads to the formation of calmodulin/MLCK signal transduction complexes which allow selective transduction of calcium signals. This Gallus gallus (Chicken) protein is Myosin light chain kinase, smooth muscle (Mylk).